The sequence spans 260 residues: UPF0246 protein APL_0602 (260 aa).

Belongs to the UPF0246 family.

In Actinobacillus pleuropneumoniae serotype 5b (strain L20), this protein is UPF0246 protein APL_0602.